The primary structure comprises 741 residues: NAD(P)H-quinone oxidoreductase subunit 5, chloroplastic (741 aa).

The next 15 membrane-spanning stretches (helical) occupy residues 9–29 (WIIP…LLLF), 40–60 (WAVP…ELAI), 89–109 (IDPL…LVLI), 125–145 (FSYL…SNLI), 147–167 (IYIF…FWFA), 185–205 (GDFG…SFEF), 219–239 (NGVN…GAVA), 258–278 (TPIS…FLVA), 280–300 (LLPL…IGVI), 327–347 (LGYI…FHLI), 396–416 (TTFF…CFWS), 425–445 (WLYS…TAFY), 547–567 (LLPL…GIPF), 606–626 (ILSV…YGSV), and 721–741 (SYIF…YFFI).

This sequence belongs to the complex I subunit 5 family. In terms of assembly, NDH is composed of at least 16 different subunits, 5 of which are encoded in the nucleus.

The protein localises to the plastid. The protein resides in the chloroplast thylakoid membrane. The enzyme catalyses a plastoquinone + NADH + (n+1) H(+)(in) = a plastoquinol + NAD(+) + n H(+)(out). It carries out the reaction a plastoquinone + NADPH + (n+1) H(+)(in) = a plastoquinol + NADP(+) + n H(+)(out). Its function is as follows. NDH shuttles electrons from NAD(P)H:plastoquinone, via FMN and iron-sulfur (Fe-S) centers, to quinones in the photosynthetic chain and possibly in a chloroplast respiratory chain. The immediate electron acceptor for the enzyme in this species is believed to be plastoquinone. Couples the redox reaction to proton translocation, and thus conserves the redox energy in a proton gradient. The polypeptide is NAD(P)H-quinone oxidoreductase subunit 5, chloroplastic (ndhF) (Ceratophyllum demersum (Rigid hornwort)).